The sequence spans 599 residues: THO complex subunit 1 (599 aa).

Disordered regions lie at residues 376–395 (EKQP…RRQR) and 497–599 (KYQA…MPVS). Positions 502 to 522 (PNEKAKRAKKEETKGGSHETE) are enriched in basic and acidic residues. Acidic residues predominate over residues 575-585 (QIEDGETEEAG).

Component of the THO complex, which is composed of THO1, THO2, THO3, THO5, THO6 and THO7.

It is found in the nucleus. Functionally, acts as a component of the THO subcomplex of the TREX complex which is thought to couple mRNA transcription, processing and nuclear export. Contributes to the integrity of the endogenous trans-acting small interfering RNA (ta-siRNA) pathway. May process or transport a long RNA molecule so that it can be a template for secondary siRNA production. May participate in the trafficking of siRNA precursors to the ARGONAUTE catalytic center. Required for the generation of functional messenger ribonucleoproteins (mRNPs). Plays an important roles in plant innate immunity. In Arabidopsis thaliana (Mouse-ear cress), this protein is THO complex subunit 1 (THO1).